Consider the following 940-residue polypeptide: UvrABC system protein A (940 aa).

32-39 (GLSGSGKS) is a binding site for ATP. The C4-type zinc finger occupies 252–279 (CIDCGISIDEISPRLFSFNSPFGKCDYC). 2 ABC transporter domains span residues 309–589 (WANT…EGSL) and 609–937 (SNGK…HYLK). ATP is bound at residue 641–648 (GVSGSGKS). The segment at 740 to 766 (CEACKGDGIIKIEMQFLSDVYVPCEIC) adopts a C4-type zinc-finger fold.

It belongs to the ABC transporter superfamily. UvrA family. In terms of assembly, forms a heterotetramer with UvrB during the search for lesions.

It localises to the cytoplasm. Functionally, the UvrABC repair system catalyzes the recognition and processing of DNA lesions. UvrA is an ATPase and a DNA-binding protein. A damage recognition complex composed of 2 UvrA and 2 UvrB subunits scans DNA for abnormalities. When the presence of a lesion has been verified by UvrB, the UvrA molecules dissociate. The sequence is that of UvrABC system protein A from Clostridium tetani (strain Massachusetts / E88).